Here is a 997-residue protein sequence, read N- to C-terminus: Protein translocase subunit SecA (997 aa).

Residues Gln84, 102–106 (GEGKT), and Asp582 each bind ATP. Residues 950 to 997 (PYVPVPEAKPEPSEVFGVERKRATPPPQPGLSRAERRRLMRQEKKRKK) are disordered. Residues 957–971 (AKPEPSEVFGVERKR) show a composition bias toward basic and acidic residues. Positions 984–997 (ERRRLMRQEKKRKK) are enriched in basic residues.

This sequence belongs to the SecA family. Part of the essential Sec protein translocation apparatus which comprises SecA, SecYEG and auxiliary proteins SecDF. Other proteins may also be involved. Monomer and homodimer.

The protein localises to the cell inner membrane. The protein resides in the cytoplasm. It carries out the reaction ATP + H2O + cellular proteinSide 1 = ADP + phosphate + cellular proteinSide 2.. In terms of biological role, part of the Sec protein translocase complex. Interacts with the SecYEG preprotein conducting channel. Has a central role in coupling the hydrolysis of ATP to the transfer of proteins into and across the cell membrane, serving as an ATP-driven molecular motor driving the stepwise translocation of polypeptide chains across the membrane. This is Protein translocase subunit SecA from Thermus thermophilus (strain ATCC 27634 / DSM 579 / HB8).